A 508-amino-acid chain; its full sequence is Chromosomal replication initiator protein DnaA (508 aa).

The interval 1 to 91 is domain I, interacts with DnaA modulators; sequence MADDPGSSFT…TDALSRRLGQ (91 aa). Residues 91–167 form a domain II region; sequence QQIQLGVRIA…AIDPAVAAGT (77 aa). A disordered region spans residues 104-152; that stretch reads DDVEDALIPSAEPFPDTDADLSARRRTDSRASGERGAVTNTQPGWTNYF. Residues 124–136 show a composition bias toward basic and acidic residues; the sequence is LSARRRTDSRASG. Residues 141–152 are compositionally biased toward polar residues; the sequence is VTNTQPGWTNYF. Positions 168 to 384 are domain III, AAA+ region; sequence SLNRRYTFDT…GALIRVTAFA (217 aa). Gly-212, Gly-214, Lys-215, and Thr-216 together coordinate ATP. The domain IV, binds dsDNA stretch occupies residues 385–508; that stretch reads SLNKTPIDKS…TTRIRQRSKR (124 aa).

Belongs to the DnaA family. As to quaternary structure, oligomerizes as a right-handed, spiral filament on DNA at oriC.

The protein localises to the cytoplasm. Functionally, plays an essential role in the initiation and regulation of chromosomal replication. ATP-DnaA binds to the origin of replication (oriC) to initiate formation of the DNA replication initiation complex once per cell cycle. Binds the DnaA box (a 9 base pair repeat at the origin) and separates the double-stranded (ds)DNA. Forms a right-handed helical filament on oriC DNA; dsDNA binds to the exterior of the filament while single-stranded (ss)DNA is stabiized in the filament's interior. The ATP-DnaA-oriC complex binds and stabilizes one strand of the AT-rich DNA unwinding element (DUE), permitting loading of DNA polymerase. After initiation quickly degrades to an ADP-DnaA complex that is not apt for DNA replication. Binds acidic phospholipids. The polypeptide is Chromosomal replication initiator protein DnaA (Mycobacterium avium).